A 232-amino-acid polypeptide reads, in one-letter code: Platelet-activating factor acetylhydrolase IB subunit alpha1 (232 aa).

S2 carries the post-translational modification N-acetylserine. Position 2 is a phosphoserine (S2). Active-site residues include S47, D192, and H195.

It belongs to the 'GDSL' lipolytic enzyme family. Platelet-activating factor acetylhydrolase IB beta/gamma subunits subfamily. Forms a catalytic dimer which is either homodimer (alpha1/alpha1 homodimer) or heterodimer with PAFAH1B2 (alpha1/alpha2 heterodimer). Component of the cytosolic (PAF-AH (I)) heterotetrameric enzyme, which is composed of PAFAH1B1 (beta), PAFAH1B2 (alpha2) and PAFAH1B3 (alpha1) subunits. The catalytic activity of the enzyme resides in the alpha1 (PAFAH1B3) and alpha2 (PAFAH1B2) subunits, whereas the beta subunit (PAFAH1B1) has regulatory activity. Trimer formation is not essential for the catalytic activity. Interacts with VLDLR; this interaction may modulate the Reelin pathway.

It is found in the cytoplasm. It carries out the reaction a 1-O-alkyl-2-acetyl-sn-glycero-3-phosphocholine + H2O = a 1-O-alkyl-sn-glycero-3-phosphocholine + acetate + H(+). It catalyses the reaction 1-O-hexadecyl-2-acetyl-sn-glycero-3-phosphocholine + H2O = 1-O-hexadecyl-sn-glycero-3-phosphocholine + acetate + H(+). The catalysed reaction is 1-O-hexadecyl-2-acetyl-sn-glycero-3-phosphate + H2O = 1-O-hexadecyl-sn-glycero-3-phosphate + acetate + H(+). With respect to regulation, beta subunit (PAFAH1B1) inhibits the acetylhydrolase activity of the alpha1/alpha1 catalytic homodimer. Alpha1 catalytic subunit of the cytosolic type I platelet-activating factor (PAF) acetylhydrolase (PAF-AH (I)) heterotetrameric enzyme that catalyzes the hydrolyze of the acetyl group at the sn-2 position of PAF and its analogs and modulates the action of PAF. The activity and substrate specificity of PAF-AH (I) are affected by its subunit composition. Both alpha1/alpha1 homodimer (PAFAH1B3/PAFAH1B3 homodimer) and alpha1/alpha2 heterodimer(PAFAH1B3/PAFAH1B2 heterodimer) hydrolyze 1-O-alkyl-2-acetyl-sn-glycero-3-phosphoric acid (AAGPA) more efficiently than PAF, but they have little hydrolytic activity towards 1-O-alkyl-2-acetyl-sn-glycero-3-phosphorylethanolamine (AAGPE). Plays an important role during the development of brain. The protein is Platelet-activating factor acetylhydrolase IB subunit alpha1 of Bos taurus (Bovine).